The sequence spans 266 residues: Gap junction beta-4 protein (266 aa).

An intramembrane segment occupies 2–13; sequence NWGFLQGILSGV. The Cytoplasmic portion of the chain corresponds to 14–20; it reads NKYSTAL. The helical transmembrane segment at 21 to 40 threads the bilayer; it reads GRIWLSVVFIFRVLVYVVAA. The Extracellular segment spans residues 41–73; it reads EEVWDDDQKDFICNTKQPGCPNVCYDEFFPVSH. Cystine bridges form between Cys53/Cys175, Cys60/Cys169, and Cys64/Cys164. Residues 74–94 form a helical membrane-spanning segment; the sequence is VRLWALQLILVTCPSLLVVMH. The Cytoplasmic portion of the chain corresponds to 95 to 130; sequence VAYREERERKHRLKHGPNAPALYSNLSKKRGGLWWT. The chain crosses the membrane as a helical span at residues 131–151; that stretch reads YLLSLIFKAAVDSGFLYIFHC. Topologically, residues 152–184 are extracellular; sequence IYKDYDMPRVVACSVTPCPHTVDCYIARPTEKK. Residues 185–205 form a helical membrane-spanning segment; it reads VFTYFMVVTAAICILLNLSEV. Over 206-266 the chain is Cytoplasmic; sequence VYLVGKRCME…MATVDAGVYP (61 aa).

This sequence belongs to the connexin family. Beta-type (group I) subfamily. In terms of assembly, a hemichannel or connexon is composed of a hexamer of connexins. A functional gap junction is formed by the apposition of two hemichannels. Forms heteromeric channels with GJB2. As to expression, detected in cochlea (at protein level). Detected in cochlea. Expressed in skin.

The protein localises to the cell membrane. The protein resides in the cell junction. It localises to the gap junction. Structural component of gap junctions. Gap junctions are dodecameric channels that connect the cytoplasm of adjoining cells. They are formed by the docking of two hexameric hemichannels, one from each cell membrane. Small molecules and ions diffuse from one cell to a neighboring cell via the central pore. This is Gap junction beta-4 protein (Gjb4) from Mus musculus (Mouse).